The sequence spans 824 residues: Phenylalanine--tRNA ligase beta subunit (824 aa).

The tRNA-binding domain maps to 39–153 (SEQAKNVVIG…NIPPIGSNAV (115 aa)). The B5 domain occupies 414–507 (KKSISVNLRM…RLIGYDNFDS (94 aa)). 4 residues coordinate Mg(2+): D485, D491, E494, and E495. An FDX-ACB domain is found at 730–823 (PTVPYMERDI…LKEKIKAELR (94 aa)).

This sequence belongs to the phenylalanyl-tRNA synthetase beta subunit family. Type 1 subfamily. In terms of assembly, tetramer of two alpha and two beta subunits. Mg(2+) serves as cofactor.

The protein localises to the cytoplasm. It catalyses the reaction tRNA(Phe) + L-phenylalanine + ATP = L-phenylalanyl-tRNA(Phe) + AMP + diphosphate + H(+). The polypeptide is Phenylalanine--tRNA ligase beta subunit (Prochlorococcus marinus (strain NATL2A)).